The sequence spans 122 residues: Basic phospholipase A2 10 (122 aa).

Disulfide bonds link Cys26–Cys114, Cys28–Cys43, Cys42–Cys94, Cys48–Cys122, Cys49–Cys87, Cys56–Cys80, and Cys74–Cys85. Residues Tyr27, Gly29, and Gly31 each contribute to the Ca(2+) site. Residue His46 is part of the active site. Asp47 is a binding site for Ca(2+). Residue Asp88 is part of the active site.

Ca(2+) is required as a cofactor. Expressed by the venom gland.

Its subcellular location is the secreted. It catalyses the reaction a 1,2-diacyl-sn-glycero-3-phosphocholine + H2O = a 1-acyl-sn-glycero-3-phosphocholine + a fatty acid + H(+). Its activity is regulated as follows. Inhibited by chemical modifications mediated by p-BPB, anhydrous acetic acid and NBSF. Functionally, snake venom phospholipase A2 (PLA2) that has a strong dose-dependent anticoagulant effect. In vivo, intramuscular and intervenal injection causes muscle necrosis. Induces moderate edema in the mouse foot pad. PLA2 catalyzes the calcium-dependent hydrolysis of the 2-acyl groups in 3-sn-phosphoglycerides. The polypeptide is Basic phospholipase A2 10 (Crotalus durissus cumanensis (South American rattlesnake)).